We begin with the raw amino-acid sequence, 313 residues long: Methionyl-tRNA formyltransferase (313 aa).

110 to 113 contacts (6S)-5,6,7,8-tetrahydrofolate; it reads SLLP.

This sequence belongs to the Fmt family.

It carries out the reaction L-methionyl-tRNA(fMet) + (6R)-10-formyltetrahydrofolate = N-formyl-L-methionyl-tRNA(fMet) + (6S)-5,6,7,8-tetrahydrofolate + H(+). Its function is as follows. Attaches a formyl group to the free amino group of methionyl-tRNA(fMet). The formyl group appears to play a dual role in the initiator identity of N-formylmethionyl-tRNA by promoting its recognition by IF2 and preventing the misappropriation of this tRNA by the elongation apparatus. The polypeptide is Methionyl-tRNA formyltransferase (Enterococcus faecalis (strain ATCC 700802 / V583)).